Consider the following 156-residue polypeptide: MIQSQHSQTARHALAETVVLAKARKNLSFAQLTDGTGLSEAFVTAALLGQHALPADAARIVADKLGLDDDAVLLLQTIPLRGSIDDRVPTDPTIYRFYEMLQVYGTTLKALVHEKFGDGIISAINFRLDVKKVDDPEGGSRAVITLDGKYLPTKPF.

Catalysis depends on residues arginine 96, glutamate 99, and serine 122.

This sequence belongs to the cyanase family.

The catalysed reaction is cyanate + hydrogencarbonate + 3 H(+) = NH4(+) + 2 CO2. Its function is as follows. Catalyzes the reaction of cyanate with bicarbonate to produce ammonia and carbon dioxide. In Burkholderia cenocepacia (strain ATCC BAA-245 / DSM 16553 / LMG 16656 / NCTC 13227 / J2315 / CF5610) (Burkholderia cepacia (strain J2315)), this protein is Cyanate hydratase.